Reading from the N-terminus, the 1081-residue chain is Pre-mRNA-splicing factor SYF1 (1081 aa).

The tract at residues 1-27 (MPPKMRSSQENVAVSSDATIQASSASS) is disordered. HAT repeat units lie at residues 54–86 (TLIP…HIIN), 117–149 (TALR…NRSR), 204–236 (QEWK…MFIH), and 243–277 (LSFT…WAER). The segment at 308–337 (QREDQDEPEGEEEEAEDDAQSDRSRKQSGS) is disordered. Residues 311 to 326 (DQDEPEGEEEEAEDDA) show a composition bias toward acidic residues. HAT repeat units follow at residues 444 to 477 (TRLN…YWIK) and 479 to 514 (GEFD…TSEN). The span at 526 to 540 (EGGDEEADAEDQEET) shows a compositional bias: acidic residues. Residues 526-546 (EGGDEEADAEDQEETREDKEA) are disordered. HAT repeat units lie at residues 656–692 (GDLE…MELR), 711–745 (RNTK…LEES), 747–779 (GDVE…FLED), 781–815 (KYFE…KFVK), 820–854 (AKLE…LEEE), 856–887 (GLVK…YIAK), 892–926 (FGLA…LERK), and 928–962 (GEID…FEIE). 2 stretches are compositionally biased toward low complexity: residues 1001–1011 (NQAQRGAQGSS) and 1047–1059 (STAA…ADTT). Disordered stretches follow at residues 1001–1022 (NQAQ…DVDA) and 1047–1081 (STAA…QDLL). Residues 1070 to 1081 (VGGDDQDDQDLL) are compositionally biased toward acidic residues.

Belongs to the crooked-neck family. Associated with the spliceosome.

It localises to the nucleus. Functionally, involved in pre-mRNA splicing and cell cycle progression. This chain is Pre-mRNA-splicing factor SYF1 (SYF1), found in Mycosarcoma maydis (Corn smut fungus).